Consider the following 530-residue polypeptide: Transcriptional regulator VasH (530 aa).

One can recognise a Sigma-54 factor interaction domain in the interval leucine 193–alanine 422. ATP-binding positions include glycine 221–glutamate 228 and alanine 284–glutamate 293.

Its function is as follows. Transcriptional regulator of the type VI secretion system. In Vibrio cholerae serotype O1 (strain ATCC 39315 / El Tor Inaba N16961), this protein is Transcriptional regulator VasH.